A 181-amino-acid chain; its full sequence is ATP synthase subunit delta (181 aa).

This sequence belongs to the ATPase delta chain family. F-type ATPases have 2 components, F(1) - the catalytic core - and F(0) - the membrane proton channel. F(1) has five subunits: alpha(3), beta(3), gamma(1), delta(1), epsilon(1). F(0) has three main subunits: a(1), b(2) and c(10-14). The alpha and beta chains form an alternating ring which encloses part of the gamma chain. F(1) is attached to F(0) by a central stalk formed by the gamma and epsilon chains, while a peripheral stalk is formed by the delta and b chains.

It is found in the cell inner membrane. F(1)F(0) ATP synthase produces ATP from ADP in the presence of a proton or sodium gradient. F-type ATPases consist of two structural domains, F(1) containing the extramembraneous catalytic core and F(0) containing the membrane proton channel, linked together by a central stalk and a peripheral stalk. During catalysis, ATP synthesis in the catalytic domain of F(1) is coupled via a rotary mechanism of the central stalk subunits to proton translocation. In terms of biological role, this protein is part of the stalk that links CF(0) to CF(1). It either transmits conformational changes from CF(0) to CF(1) or is implicated in proton conduction. The protein is ATP synthase subunit delta of Chlorobium luteolum (strain DSM 273 / BCRC 81028 / 2530) (Pelodictyon luteolum).